Reading from the N-terminus, the 460-residue chain is Ribosome biogenesis protein YTM1 (460 aa).

Residues V8–R89 form a ubiquitin-like (UBL) domain region. The interval S99–N460 is sufficient for interaction with ERB1 and association with 66S pre-ribosomes. 7 WD repeats span residues S101–Y140, G142–T180, G206–V244, S285–T325, T327–V366, G373–T413, and G424–N460.

This sequence belongs to the WD repeat WDR12/YTM1 family. Component of the NOP7 complex, composed of ERB1, NOP7 and YTM1. The complex is held together by ERB1, which interacts with NOP7 via its N-terminal domain and with YTM1 via a high-affinity interaction between the seven-bladed beta-propeller domains of the 2 proteins. The NOP7 complex associates with the 66S pre-ribosome. Interacts (via UBL domain) with MDN1 (via VWFA/MIDAS domain).

It localises to the nucleus. It is found in the nucleolus. The protein resides in the nucleoplasm. In terms of biological role, component of the NOP7 complex, which is required for maturation of the 25S and 5.8S ribosomal RNAs and formation of the 60S ribosome. The chain is Ribosome biogenesis protein YTM1 from Saccharomyces cerevisiae (strain YJM789) (Baker's yeast).